The primary structure comprises 101 residues: NAD(P)H-quinone oxidoreductase subunit 4L, chloroplastic (101 aa).

Transmembrane regions (helical) follow at residues 2–22, 32–52, and 61–81; these read ILEH…YGLI, MCLE…SDFF, and IFCI…LAIV.

This sequence belongs to the complex I subunit 4L family. In terms of assembly, NDH is composed of at least 16 different subunits, 5 of which are encoded in the nucleus.

It localises to the plastid. Its subcellular location is the chloroplast thylakoid membrane. It carries out the reaction a plastoquinone + NADH + (n+1) H(+)(in) = a plastoquinol + NAD(+) + n H(+)(out). The catalysed reaction is a plastoquinone + NADPH + (n+1) H(+)(in) = a plastoquinol + NADP(+) + n H(+)(out). NDH shuttles electrons from NAD(P)H:plastoquinone, via FMN and iron-sulfur (Fe-S) centers, to quinones in the photosynthetic chain and possibly in a chloroplast respiratory chain. The immediate electron acceptor for the enzyme in this species is believed to be plastoquinone. Couples the redox reaction to proton translocation, and thus conserves the redox energy in a proton gradient. The protein is NAD(P)H-quinone oxidoreductase subunit 4L, chloroplastic of Arabidopsis thaliana (Mouse-ear cress).